We begin with the raw amino-acid sequence, 470 residues long: MNPNQKIIAIGSASLGILILNVILHVVSIIVTVLVLNNNGTGLNCNGTIIREYNETVRVERITQWYNTNTIEYIERPSNEYYMNNTEPLCEAQGFAPFSKDNGIRIGSRGHVFVIREPFVSCSPSECRTFFLTQGSLLNDKHSNGTVKDRSPYRTLMSVKIGQSPNVYQARFESVAWSATACHDGKKWMTVGVTGPDNQAVAVVNYGGVPVDIINSWAGDILRTQESSCTCIKGDCYWVMTDGPANRQAKYRIFKAKDGRIIGQTDISFNGGHIEECSCYPNEGKVECICRDNWTGTNRPILVISSDLSYTVGYLCAGIPTDTPRGEDSQFTGSCTSPLGNKGYGVKGFGFRQGTDVWAGRTISRTSRSGFEIIKIRNGWTQNSKDQIRRQVIIDNLNWSGYSGSFTLPVELTKKGCLVPCFWVEMIRGKPEETTIWTSSSSIVMCGVDHKIASWSWHDGAILPFDIDKM.

Residues 1–14 (MNPNQKIIAIGSAS) are Intravirion-facing. The interval 11-32 (GSASLGILILNVILHVVSIIVT) is involved in apical transport and lipid raft association. The helical transmembrane segment at 15-35 (LGILILNVILHVVSIIVTVLV) threads the bilayer. Positions 32 to 86 (TVLVLNNNGTGLNCNGTIIREYNETVRVERITQWYNTNTIEYIERPSNEYYMNNT) are hypervariable stalk region. The Virion surface portion of the chain corresponds to 36–470 (LNNNGTGLNC…AILPFDIDKM (435 aa)). 4 N-linked (GlcNAc...) asparagine; by host glycosylation sites follow: Asn39, Asn46, Asn54, and Asn84. The tract at residues 89–470 (LCEAQGFAPF…AILPFDIDKM (382 aa)) is head of neuraminidase. 8 disulfide bridges follow: Cys90–Cys417, Cys122–Cys127, Cys182–Cys229, Cys231–Cys236, Cys277–Cys290, Cys279–Cys288, Cys316–Cys335, and Cys421–Cys446. Arg116 contacts substrate. N-linked (GlcNAc...) asparagine; by host glycosylation occurs at Asn144. Asp149 acts as the Proton donor/acceptor in catalysis. Arg150 contacts substrate. Position 275–276 (275–276 (EE)) interacts with substrate. Arg291 serves as a coordination point for substrate. Asp292 contacts Ca(2+). N-linked (GlcNAc...) asparagine; by host glycosylation is present at Asn293. The Ca(2+) site is built by Gly296 and Asp322. Residue Arg368 participates in substrate binding. Asn398 is a glycosylation site (N-linked (GlcNAc...) asparagine; by host). Tyr402 (nucleophile) is an active-site residue.

The protein belongs to the glycosyl hydrolase 34 family. As to quaternary structure, homotetramer. Requires Ca(2+) as cofactor. Post-translationally, N-glycosylated.

It is found in the virion membrane. The protein resides in the host apical cell membrane. The enzyme catalyses Hydrolysis of alpha-(2-&gt;3)-, alpha-(2-&gt;6)-, alpha-(2-&gt;8)- glycosidic linkages of terminal sialic acid residues in oligosaccharides, glycoproteins, glycolipids, colominic acid and synthetic substrates.. With respect to regulation, inhibited by the neuraminidase inhibitors zanamivir (Relenza) and oseltamivir (Tamiflu). These drugs interfere with the release of progeny virus from infected cells and are effective against all influenza strains. Resistance to neuraminidase inhibitors is quite rare. Functionally, catalyzes the removal of terminal sialic acid residues from viral and cellular glycoconjugates. Cleaves off the terminal sialic acids on the glycosylated HA during virus budding to facilitate virus release. Additionally helps virus spread through the circulation by further removing sialic acids from the cell surface. These cleavages prevent self-aggregation and ensure the efficient spread of the progeny virus from cell to cell. Otherwise, infection would be limited to one round of replication. Described as a receptor-destroying enzyme because it cleaves a terminal sialic acid from the cellular receptors. May facilitate viral invasion of the upper airways by cleaving the sialic acid moieties on the mucin of the airway epithelial cells. Likely to plays a role in the budding process through its association with lipid rafts during intracellular transport. May additionally display a raft-association independent effect on budding. Plays a role in the determination of host range restriction on replication and virulence. Sialidase activity in late endosome/lysosome traffic seems to enhance virus replication. The protein is Neuraminidase of Aves (Horse).